Consider the following 495-residue polypeptide: Bile acid-sensitive ion channel (495 aa).

A binds the plasma membrane and stabilizes the channel in the closed state region spans residues 1 to 30 (MEHTEKSKGPAEKGLLGKIRRYLSKRPLPS). The Cytoplasmic segment spans residues 1-61 (MEHTEKSKGP…NIAQNQNKVR (61 aa)). The helical transmembrane segment at 62–82 (KVIWLSVVLGSVSLLVWQIYS) threads the bilayer. The Extracellular portion of the chain corresponds to 83 to 459 (RLVNYFMWPT…GLFCGASLIT (377 aa)). 6 disulfides stabilise this stretch: C112–C207, C185–C192, C298–C377, C315–C373, C328–C350, and C330–C342. N-linked (GlcNAc...) asparagine glycosylation is found at N147 and N163. N-linked (GlcNAc...) asparagine glycosylation is present at N306. N-linked (GlcNAc...) asparagine glycosylation is found at N370, N405, and N421. The GAS motif; ion selectivity filter signature appears at 454–456 (GAS). Residues 460–480 (IIEIIEYLFTSFYWVFIFFLL) form a helical membrane-spanning segment. Topologically, residues 481 to 495 (KILEMIQRTSPPQTV) are cytoplasmic.

The protein belongs to the amiloride-sensitive sodium channel (TC 1.A.6) family. ASIC5 subfamily. In terms of assembly, forms homotrimeric channels. In terms of tissue distribution, expressed by cholangiocytes (at protein level). Detected in brain, liver, duodenum, jejunum, ileum and testis.

Its subcellular location is the apical cell membrane. It is found in the cell membrane. It catalyses the reaction Na(+)(in) = Na(+)(out). The catalysed reaction is Li(+)(in) = Li(+)(out). The enzyme catalyses K(+)(in) = K(+)(out). It carries out the reaction H(+)(in) = H(+)(out). With respect to regulation, inhibited by the diuretic drug amiloride. Inhibited by diminazene. Inhibited by extracellular Ca(2+). Its function is as follows. Forms bile acid-gated sodium channels and may play a role in bile acid-dependent absorption and secretion by epithelial cells of the bile ducts. Displays high selectivity for sodium ions but can also permit the permeation of other cations. The gating could be indirect and the consequence of alterations of the membrane environment of the channel by bile acids. As a sodium channel of type II unipolar brush cells of the vestibulocerebellum, controlling the electrical activity of these cells, could play a role in motor coordination and balance. The protein is Bile acid-sensitive ion channel of Rattus norvegicus (Rat).